We begin with the raw amino-acid sequence, 60 residues long: Large ribosomal subunit protein bL33 (60 aa).

The protein belongs to the bacterial ribosomal protein bL33 family.

The polypeptide is Large ribosomal subunit protein bL33 (Chlorobium phaeovibrioides (strain DSM 265 / 1930) (Prosthecochloris vibrioformis (strain DSM 265))).